Here is a 156-residue protein sequence, read N- to C-terminus: MSRKNRAPKRDVLPDPLYNSQLVTRLINRVMLDGKRGTAASIVYGAFEQIKEATGNDALEVFETAMENIMPVLEVRARRVGGSNYQVPVEVRPERRTTLGLRWLVTIARLRGEHTMQDRLAKEILDAANNTGAAVKKREDTHRMAEANRAFAHFRW.

It belongs to the universal ribosomal protein uS7 family. Part of the 30S ribosomal subunit. Contacts proteins S9 and S11.

In terms of biological role, one of the primary rRNA binding proteins, it binds directly to 16S rRNA where it nucleates assembly of the head domain of the 30S subunit. Is located at the subunit interface close to the decoding center, probably blocks exit of the E-site tRNA. The sequence is that of Small ribosomal subunit protein uS7 from Streptococcus pneumoniae (strain Taiwan19F-14).